A 1378-amino-acid chain; its full sequence is Attractin-like protein 1 (1378 aa).

An N-terminal signal peptide occupies residues 1–51 (MEPGVRARSGAPQPASPVLWRARPAGGGGASSWLLLDGNSWLLCYGFLYLA). One can recognise an EGF-like 1 domain in the interval 52–90 (LYAQVSQSKPCERTGSCFSGRCVNSTCLCDPGWVGDQCQ). Over 52–1229 (LYAQVSQSKP…FSQHNTIMDL (1178 aa)) the chain is Extracellular. Cystine bridges form between C62/C78, C80/C89, and C92/C118. N-linked (GlcNAc...) asparagine glycosylation is present at N75. A CUB domain is found at 92–208 (CQGRFKLTEP…TGFNIFYSIN (117 aa)). Residues N173 and N197 are each glycosylated (N-linked (GlcNAc...) asparagine). Residues 206–244 (SINSCPNNCSGHGKCTTSVSVASQVYCECDKYWKGEACD) enclose the EGF-like 2 domain. Cystine bridges form between C210-C220, C214-C232, and C234-C243. Kelch repeat units follow at residues 315 to 364 (FMWV…LYQE), 366 to 414 (IFMY…EGHS), 426 to 474 (VMIV…SVYD), 479 to 530 (SIYV…LING), 532 to 590 (MLIF…VING), and 591 to 637 (SMYI…WNKN). N379 carries an N-linked (GlcNAc...) asparagine glycan. PSI domains lie at 613–656 (NCKA…AKCP), 665–708 (RCYR…TKCH), and 714–759 (ICNK…DACL). N703 is a glycosylation site (N-linked (GlcNAc...) asparagine). In terms of domain architecture, C-type lectin spans 754 to 872 (VGDACLRINS…TSMADGLVCE (119 aa)). An intrachain disulfide couples C775 to C871. N-linked (GlcNAc...) asparagine glycosylation is found at N777 and N897. PSI domains follow at residues 888–938 (PCSL…ATCS) and 941–1011 (NCSG…IQCP). Disulfide bonds link C1013-C1021, C1015-C1027, C1030-C1039, C1042-C1056, C1059-C1068, C1061-C1075, C1077-C1087, and C1090-C1105. Laminin EGF-like domains follow at residues 1013-1058 (CQCN…QCTA) and 1059-1107 (CTCG…TCYY). N1156 is a glycosylation site (N-linked (GlcNAc...) asparagine). The chain crosses the membrane as a helical span at residues 1230-1250 (VQFFVTFFSCFLSLLLVAAVV). The Cytoplasmic portion of the chain corresponds to 1251 to 1378 (WKIKQTCWAS…HLSTRQGTCV (128 aa)). Positions 1287–1324 (VGAEQTDFLRGPLEGAPKPIAIEPCAGNRAAVLTVFLC) are interaction with MC4R. The segment at 1351–1378 (QQKPSDNKDKTSGVRNRKHLSTRQGTCV) is disordered.

Interacts with MC4R. As to expression, highly expressed in brain, heart, lung, kidney and liver. In the central nervous system, it is highly expressed in the dentate gyrus, CA1-3 regions of the hippocampus, and the ventral taenia tecta.

Its subcellular location is the cell membrane. Its function is as follows. May play a role in melanocortin signaling pathways that regulate energy homeostasis. This is Attractin-like protein 1 (Atrnl1) from Mus musculus (Mouse).